Here is an 803-residue protein sequence, read N- to C-terminus: Zinc finger and BTB domain-containing protein 17 (803 aa).

The 104-residue stretch at 1–104 (MDFPQHSQHV…VATFLQMQDI (104 aa)) folds into the BTB domain. The interval 116–295 (EPATSPGGNA…GLRSGTYGDR (180 aa)) is disordered. A Phosphoserine modification is found at S120. Over residues 132-142 (GGDKRAKEEKV) the composition is skewed to basic and acidic residues. Low complexity-rich tracts occupy residues 171-180 (GQAQSAASGA) and 206-217 (AAAEAEAALSES). Composition is skewed to acidic residues over residues 233–244 (EQKEQEEQEEEG) and 261–272 (EAPEENENEESA). The interaction with MYC stretch occupies residues 269–308 (EESAGTDSGQELGSEARGLRSGTYGDRTESKAYGSVIHKC). C2H2-type zinc fingers lie at residues 306 to 328 (HKCE…IRIH), 334 to 356 (FSCR…EKTH), 362 to 384 (YGCE…KKRH), 390 to 412 (YRCE…QLVH), 418 to 440 (YQCD…LETH), 446 to 468 (HKCP…LKIH), 474 to 496 (LKCR…LRIH), 502 to 524 (YVCI…VRIH), 530 to 552 (CQCV…VRQH), 558 to 580 (YVCE…IRHH), 586 to 608 (HKCS…IIIH), 614 to 637 (YLCD…KTVH), and 717 to 739 (YACD…VRIH). K397 is covalently cross-linked (Glycyl lysine isopeptide (Lys-Gly) (interchain with G-Cter in ubiquitin)). K481 is covalently cross-linked (Glycyl lysine isopeptide (Lys-Gly) (interchain with G-Cter in ubiquitin)). Residues 637–718 (HQGKAGIKIL…EDPNTHILYA (82 aa)) are interaction with MYC. The interaction with HCFC1 stretch occupies residues 637–803 (HQGKAGIKIL…TAPECPPPAE (167 aa)). Positions 779–803 (RDGAEGQPALAETSPTAPECPPPAE) are disordered.

This sequence belongs to the krueppel C2H2-type zinc-finger protein family. As to quaternary structure, homooligomerizes (via the BTB/POZ domain), multimerization is required for DNA binding. Interacts (via the C-terminal zinc fingers) with GIF1; the interaction results in the recruitment of MYB to the CDKN1A/p21 and CDKN1B promoters and repression of transcription. Interacts with TRAF2, interfering with the binding of UBC13 to TRAF2, and inhibiting TRAF2 E3 ligase activity. Interacts with MYC (via the C-terminal helix-loop-helix motif); the interaction inhibits ZBTB17 transactivation and growth arrest activities and renders it insoluble in the nucleus. Also interacts with HCFC1, MAGEA4 and TMPRSS11A. Interacts with BCL6; the interaction inhibits ZBTB17 transactivation activity on target genes involved in cell cycle arrest. Interacts with ZBTB49 isoform 3/ZNF509S1; this interaction blocks ZBTB17-mediated repression of RB1. In terms of processing, undergoes 'Lys-48'-linked polyubiquitination at Lys-397 and Lys-481 and subsequent proteasomal degradation in a TRAF2-dependent manner. As to expression, expressed in germinal center B-cells.

It is found in the nucleus. In terms of biological role, transcription factor that can function as an activator or repressor depending on its binding partners, and by targeting negative regulators of cell cycle progression. Plays a critical role in early lymphocyte development, where it is essential to prevent apoptosis in lymphoid precursors, allowing them to survive in response to IL7 and undergo proper lineage commitment. Has been shown to bind to the promoters of adenovirus major late protein and cyclin D1 and activate transcription. Required for early embryonic development during gastrulation. Represses RB1 transcription; this repression can be blocked by interaction with ZBTB49 isoform 3/ZNF509S1. The protein is Zinc finger and BTB domain-containing protein 17 (ZBTB17) of Homo sapiens (Human).